Here is a 125-residue protein sequence, read N- to C-terminus: Small ribosomal subunit protein uS13 (125 aa).

Positions Gly-95–Lys-125 are disordered. Over residues Thr-105–Lys-125 the composition is skewed to basic residues.

Belongs to the universal ribosomal protein uS13 family. Part of the 30S ribosomal subunit. Forms a loose heterodimer with protein S19. Forms two bridges to the 50S subunit in the 70S ribosome.

In terms of biological role, located at the top of the head of the 30S subunit, it contacts several helices of the 16S rRNA. In the 70S ribosome it contacts the 23S rRNA (bridge B1a) and protein L5 of the 50S subunit (bridge B1b), connecting the 2 subunits; these bridges are implicated in subunit movement. Contacts the tRNAs in the A and P-sites. The chain is Small ribosomal subunit protein uS13 from Leptospira borgpetersenii serovar Hardjo-bovis (strain L550).